We begin with the raw amino-acid sequence, 396 residues long: L-lactate dehydrogenase (396 aa).

The 380-residue stretch at 1 to 380 folds into the FMN hydroxy acid dehydrogenase domain; it reads MIISAASDYR…SGDSLVQELG (380 aa). Substrate is bound at residue Tyr24. FMN-binding residues include Ser106 and Gln127. Tyr129 contacts substrate. Position 155 (Thr155) interacts with FMN. Arg164 is a substrate binding site. Lys251 serves as a coordination point for FMN. The active-site Proton acceptor is His275. Arg278 serves as a coordination point for substrate. 306–330 serves as a coordination point for FMN; sequence DSGIRNGLDVVRMIALGADTVLLGR.

The protein belongs to the FMN-dependent alpha-hydroxy acid dehydrogenase family. It depends on FMN as a cofactor.

The protein localises to the cell inner membrane. The catalysed reaction is (S)-lactate + A = pyruvate + AH2. Functionally, catalyzes the conversion of L-lactate to pyruvate. Is coupled to the respiratory chain. The protein is L-lactate dehydrogenase of Salmonella schwarzengrund (strain CVM19633).